A 210-amino-acid polypeptide reads, in one-letter code: uncharacterized protein (210 aa).

This is an uncharacterized protein from Acanthamoeba polyphaga (Amoeba).